A 421-amino-acid polypeptide reads, in one-letter code: Ankyrin repeat and SOCS box protein 6 (421 aa).

ANK repeat units lie at residues 67–97 (EGVS…NLNF), 102–131 (TYYT…DINR), 136–166 (HESS…DVNA), 170–205 (HGKT…DVKA), 226–255 (GGDK…DPSE), and 260–289 (ESLT…AYNC). The SOCS box domain maps to 360 to 415 (ALHFSLRQLESYPPPLKHLCRVAIRLYLQPWPVDVKVKALPLPDRLKWYLLSEHSG).

It belongs to the ankyrin SOCS box (ASB) family. Binds APS. Identified in a complex with ELOB and ELOC. Interacts with CUL5 and RNF7. Interacts with SQSTM1.

It localises to the cytoplasm. Its pathway is protein modification; protein ubiquitination. Its function is as follows. Probable substrate-recognition component of a SCF-like ECS (Elongin-Cullin-SOCS-box protein) E3 ubiquitin-protein ligase complex which mediates the ubiquitination and subsequent proteasomal degradation of target proteins. May play a role in the regulation of cell proliferation and autophagy by promoting the ubiquitination and degradation of SQSTM1. The protein is Ankyrin repeat and SOCS box protein 6 (ASB6) of Pongo abelii (Sumatran orangutan).